The sequence spans 62 residues: Large ribosomal subunit protein bL33c (62 aa).

This sequence belongs to the bacterial ribosomal protein bL33 family.

The protein resides in the plastid. The protein localises to the chloroplast. This is Large ribosomal subunit protein bL33c from Cyanidioschyzon merolae (strain NIES-3377 / 10D) (Unicellular red alga).